The following is a 126-amino-acid chain: Large ribosomal subunit protein bL17 (126 aa).

It belongs to the bacterial ribosomal protein bL17 family. In terms of assembly, part of the 50S ribosomal subunit. Contacts protein L32.

This Aliivibrio fischeri (strain ATCC 700601 / ES114) (Vibrio fischeri) protein is Large ribosomal subunit protein bL17.